Here is a 459-residue protein sequence, read N- to C-terminus: MRLVVIGVNHKTAPVALRERLALVGDDVNIALAQLQGFSDGSVIVSTCNRTEIYALVPESILSPNTLLASSALSVVESSISLNSSTNISSTIISAHILKIKTWLADFKQLSLDEIDPYLYVHRDMHALTHWLRVAAGLDSMILGEPQILGQIKRAVHLAQDQKALSNQLGWIVDQVFAAAKRVRNETQVGAQAVSLSYAAAKLVTQIFDDLPSRTLLVVAAGEMNRLVAMHIAGLGVGRIIICNRNPERAEALAAELRNPKRQIEVRTLQELPQVLAEADIVSSCSGSMDILIDKTMTLRALKSRRYQPMLMIDLAVPRDIDSTVSRIDDVYLYSVDDLQHVIAGNIEQRRQAAVDAELLVSQLVVEMDRRFQVRQVGKDIQQYRSRTHEQVDKLLQESIAKLQGDNANPEDIMIELTRRLTQNLTHAPSKLMRKAAREGDNELLDFVVSGLQDAHRHH.

Substrate-binding positions include 47 to 50, Ser140, 145 to 147, and Gln151; these read TCNR and EPQ. Cys48 acts as the Nucleophile in catalysis. NADP(+) is bound at residue 220 to 225; it reads AAGEMN.

This sequence belongs to the glutamyl-tRNA reductase family. Homodimer.

The catalysed reaction is (S)-4-amino-5-oxopentanoate + tRNA(Glu) + NADP(+) = L-glutamyl-tRNA(Glu) + NADPH + H(+). The protein operates within porphyrin-containing compound metabolism; protoporphyrin-IX biosynthesis; 5-aminolevulinate from L-glutamyl-tRNA(Glu): step 1/2. Catalyzes the NADPH-dependent reduction of glutamyl-tRNA(Glu) to glutamate 1-semialdehyde (GSA). This is Glutamyl-tRNA reductase from Psychrobacter arcticus (strain DSM 17307 / VKM B-2377 / 273-4).